Reading from the N-terminus, the 108-residue chain is MEQYSEACIEACIDCMKACNHCFTKCLEESVQHHLSGCIRLDRECADICALAVKAMQTDSPFMKEICALCADICEACGTECGKHDHDHCQACAKACFTCAEQCRSMAA.

This is an uncharacterized protein from Bacillus subtilis (strain 168).